We begin with the raw amino-acid sequence, 669 residues long: Carnitine O-palmitoyltransferase 2, mitochondrial (669 aa).

The transit peptide at 1-36 directs the protein to the mitochondrion; that stretch reads MMAGLLSTQCNSTLSKLKHLSNNPALSVLTSTHRKY. Residues 37–190 are Mitochondrial matrix-facing; it reads SSKDGAGSEY…GLLEPEVFHL (154 aa). The segment at residues 191–220 is an intramembrane region (note=Mitochondrial inner membrane); the sequence is NPAKSDTDSFKKLIRWVPPSISWFGAYMVN. Topologically, residues 221–669 are mitochondrial matrix; sequence AYPLDMSQYF…FTVLDGNPIH (449 aa). His384 functions as the Proton acceptor in the catalytic mechanism. 464–476 is a binding site for CoA; it reads GKEQLKKKKLSPD. Tyr498, Ser500, and Thr511 together coordinate (R)-carnitine.

It belongs to the carnitine/choline acetyltransferase family.

The protein resides in the mitochondrion inner membrane. It catalyses the reaction (R)-carnitine + hexadecanoyl-CoA = O-hexadecanoyl-(R)-carnitine + CoA. The catalysed reaction is octanoyl-CoA + (R)-carnitine = O-octanoyl-(R)-carnitine + CoA. It carries out the reaction decanoyl-CoA + (R)-carnitine = O-decanoyl-(R)-carnitine + CoA. The enzyme catalyses dodecanoyl-CoA + (R)-carnitine = O-dodecanoyl-R-carnitine + CoA. It catalyses the reaction tetradecanoyl-CoA + (R)-carnitine = O-tetradecanoyl-(R)-carnitine + CoA. The catalysed reaction is (R)-carnitine + octadecanoyl-CoA = O-octadecanoyl-(R)-carnitine + CoA. It carries out the reaction eicosanoyl-CoA + (R)-carnitine = O-eicosanoyl-(R)-carnitine + CoA. The enzyme catalyses (9Z)-tetradecenoyl-CoA + (R)-carnitine = O-(9Z)-tetradecenoyl-(R)-carnitine + CoA. It catalyses the reaction (5Z)-tetradecenoyl-CoA + (R)-carnitine = O-(5Z)-tetradecenoyl-(R)-carnitine + CoA. The catalysed reaction is (R)-carnitine + (9Z)-octadecenoyl-CoA = O-(9Z)-octadecenoyl-(R)-carnitine + CoA. It carries out the reaction 4,8-dimethylnonanoyl-CoA + (R)-carnitine = O-4,8-dimethylnonanoyl-(R)-carnitine + CoA. Its pathway is lipid metabolism; fatty acid beta-oxidation. Its function is as follows. Involved in the intramitochondrial synthesis of acylcarnitines from accumulated acyl-CoA metabolites. Reconverts acylcarnitines back into the respective acyl-CoA esters that can then undergo beta-oxidation, an essential step for the mitochondrial uptake of long-chain fatty acids and their subsequent beta-oxidation in the mitochondrion. Active with medium (C8-C12) and long-chain (C14-C18) acyl-CoA esters. The polypeptide is Carnitine O-palmitoyltransferase 2, mitochondrial (cpt2) (Danio rerio (Zebrafish)).